The following is a 384-amino-acid chain: L-type lectin-like domain-containing protein C4F6.05c (384 aa).

The first 19 residues, 1 to 19 (MKFCSLFHVLSFCCTLAYA), serve as a signal peptide directing secretion. The region spanning 20–224 (VPKSQFLQLH…DLVALSNLNI (205 aa)) is the L-type lectin-like domain. Residues 20 to 353 (VPKSQFLQLH…AMGNAYSPYN (334 aa)) are Extracellular-facing. Residues 227 to 251 (PDTSNNENLNPTSNTKQSVGDNTSP) are disordered. A helical membrane pass occupies residues 354-374 (LTNFMVFLLLGAIVSYGIMLV). The Cytoplasmic portion of the chain corresponds to 375–384 (RRDRRRHKYL).

The protein resides in the membrane. It is found in the endoplasmic reticulum. The protein localises to the golgi apparatus. The chain is L-type lectin-like domain-containing protein C4F6.05c from Schizosaccharomyces pombe (strain 972 / ATCC 24843) (Fission yeast).